A 401-amino-acid chain; its full sequence is Glutamyl-tRNA reductase (401 aa).

Residues 45–48, Ser-101, 106–108, and Gln-112 contribute to the substrate site; these read TCNR and EDQ. The active-site Nucleophile is Cys-46. An NADP(+)-binding site is contributed by 177–182; sequence GYGDVG.

This sequence belongs to the glutamyl-tRNA reductase family. As to quaternary structure, homodimer.

It catalyses the reaction (S)-4-amino-5-oxopentanoate + tRNA(Glu) + NADP(+) = L-glutamyl-tRNA(Glu) + NADPH + H(+). It participates in porphyrin-containing compound metabolism; protoporphyrin-IX biosynthesis; 5-aminolevulinate from L-glutamyl-tRNA(Glu): step 1/2. In terms of biological role, catalyzes the NADPH-dependent reduction of glutamyl-tRNA(Glu) to glutamate 1-semialdehyde (GSA). The sequence is that of Glutamyl-tRNA reductase from Clostridium botulinum (strain Alaska E43 / Type E3).